Here is a 368-residue protein sequence, read N- to C-terminus: Lipoyl synthase, chloroplastic (368 aa).

Disordered regions lie at residues 1–30 (MQSS…RGSV) and 42–61 (PTVG…RDPE). Residues Cys94, Cys99, Cys105, Cys131, Cys135, Cys138, and Ser346 each coordinate [4Fe-4S] cluster. Residues 114–335 (GEGDGIATAT…KEYGESVGFR (222 aa)) enclose the Radical SAM core domain.

The protein belongs to the radical SAM superfamily. Lipoyl synthase family. The cofactor is [4Fe-4S] cluster.

It localises to the plastid. It is found in the chloroplast. The catalysed reaction is [[Fe-S] cluster scaffold protein carrying a second [4Fe-4S](2+) cluster] + N(6)-octanoyl-L-lysyl-[protein] + 2 oxidized [2Fe-2S]-[ferredoxin] + 2 S-adenosyl-L-methionine + 4 H(+) = [[Fe-S] cluster scaffold protein] + N(6)-[(R)-dihydrolipoyl]-L-lysyl-[protein] + 4 Fe(3+) + 2 hydrogen sulfide + 2 5'-deoxyadenosine + 2 L-methionine + 2 reduced [2Fe-2S]-[ferredoxin]. Its pathway is protein modification; protein lipoylation via endogenous pathway; protein N(6)-(lipoyl)lysine from octanoyl-[acyl-carrier-protein]: step 2/2. Catalyzes the radical-mediated insertion of two sulfur atoms into the C-6 and C-8 positions of the octanoyl moiety bound to the lipoyl domains of lipoate-dependent enzymes, thereby converting the octanoylated domains into lipoylated derivatives. This Sorghum bicolor (Sorghum) protein is Lipoyl synthase, chloroplastic.